Here is a 555-residue protein sequence, read N- to C-terminus: Glucose-6-phosphate isomerase (555 aa).

Glu365 functions as the Proton donor in the catalytic mechanism. Active-site residues include His396 and Lys522.

This sequence belongs to the GPI family.

It is found in the cytoplasm. The catalysed reaction is alpha-D-glucose 6-phosphate = beta-D-fructose 6-phosphate. It participates in carbohydrate biosynthesis; gluconeogenesis. The protein operates within carbohydrate degradation; glycolysis; D-glyceraldehyde 3-phosphate and glycerone phosphate from D-glucose: step 2/4. Its function is as follows. Catalyzes the reversible isomerization of glucose-6-phosphate to fructose-6-phosphate. The protein is Glucose-6-phosphate isomerase of Psychrobacter arcticus (strain DSM 17307 / VKM B-2377 / 273-4).